The chain runs to 208 residues: Proheparin-binding EGF-like growth factor (208 aa).

A signal peptide spans 1-23; that stretch reads MKLLPSVVLKLFLAAVLSALVTG. A propeptide spanning residues 24–62 is cleaved from the precursor; the sequence is ESLERLRRGLAAATSNPDPPTGTTNQLLPTGADRAQEVQ. At 24–160 the chain is on the extracellular side; it reads ESLERLRRGL…ENPLYTYDHT (137 aa). A disordered region spans residues 82 to 103; the sequence is ALATPGKEKNGKKKRKGKGLGK. Threonine 85 is a glycosylation site (O-linked (GalNAc...) threonine). Basic residues predominate over residues 91 to 102; sequence NGKKKRKGKGLG. Residues 104 to 144 form the EGF-like domain; that stretch reads KRDPCLKKYKDYCIHGECRYLKELRIPSCHCLPGYHGQRCH. 3 disulfide bridges follow: cysteine 108-cysteine 121, cysteine 116-cysteine 132, and cysteine 134-cysteine 143. Residues 149–208 constitute a propeptide, C-terminal; that stretch reads PVENPLYTYDHTTVLAVVAVVLSSVCLLVIVGLLMFRYHRRGGYDLESEEKVKLGMASSH. Residues 161–184 traverse the membrane as a helical segment; it reads TVLAVVAVVLSSVCLLVIVGLLMF. At 185-208 the chain is on the cytoplasmic side; sequence RYHRRGGYDLESEEKVKLGMASSH.

Interacts with FBLN1. Interacts with EGFR and ERBB4. Post-translationally, O-glycosylated. As to expression, most abundant in skeletal muscle, lung, spleen brain and heart.

The protein localises to the secreted. Its subcellular location is the extracellular space. It localises to the cell membrane. Its function is as follows. Growth factor that mediates its effects via EGFR, ERBB2 and ERBB4. Required for normal cardiac valve formation and normal heart function. Promotes smooth muscle cell proliferation. May be involved in macrophage-mediated cellular proliferation. It is mitogenic for fibroblasts, but not endothelial cells. It is able to bind EGF receptor/EGFR with higher affinity than EGF itself and is a far more potent mitogen for smooth muscle cells than EGF. Also acts as a diphtheria toxin receptor. The polypeptide is Proheparin-binding EGF-like growth factor (Hbegf) (Rattus norvegicus (Rat)).